The chain runs to 306 residues: MSEYQNILTGVQVRTAPHSAPIAKGIFPRLGKPGFSYWLGKIGDAQIGPIYLGTTGVLSLVFGFFAIEIIGFNLLASVNWSPMEFGRQFFWLGLEPPAAEYGLGFAPLAEGGWWQIAGFFLTTSILLWWVRMYRRARALKMGTHTAWAFASAIFLFLSLGFIRPLLMGNFSESVPFGIFPHLEWTNSFSLNYGNFFYNPFHMLSIAFLYGSALLSAMHGATILAVSRLGGDREVEQITDRGTAAERAALFWRWTMGFNATMESIHRWAWWFAVLCTFTGAIGILLTGTVVDNWFEWGVKHGLAPAP.

3 helical membrane-spanning segments follow: residues 53 to 79 (GTTGVLSLVFGFFAIEIIGFNLLASVN), 111 to 140 (GGWWQIAGFFLTTSILLWWVRMYRRARALK), and 143 to 168 (THTAWAFASAIFLFLSLGFIRPLLMG). The (7R,8Z)-bacteriochlorophyll b site is built by H181 and H201. The chain crosses the membrane as a helical span at residues 198-226 (NPFHMLSIAFLYGSALLSAMHGATILAVS). H218 and E233 together coordinate Fe cation. An a ubiquinone-binding site is contributed by W251. Residues 260-286 (TMESIHRWAWWFAVLCTFTGAIGILLT) traverse the membrane as a helical segment. H265 serves as a coordination point for Fe cation.

It belongs to the reaction center PufL/M/PsbA/D family. As to quaternary structure, reaction center is composed of four bacteriochlorophylls, two bacteriopheophytins, two ubiquinones, one iron, and three highly hydrophobic polypeptide chains (designated L, M, and H).

It is found in the cellular chromatophore membrane. In terms of biological role, the reaction center is a membrane-bound complex that mediates the initial photochemical event in the electron transfer process of photosynthesis. In Rhodospirillum rubrum, this protein is Reaction center protein M chain (pufM).